A 483-amino-acid polypeptide reads, in one-letter code: MRAQPAASHFVDGRPLEDETGAPIPVIYPATGEEIARLHEATPAVIEAALASGARAQAAWAAMRPVERARILRRASDLIRAHNEELSLLETLDTGKPLQETLVADWASGADALEFFAGLAPVVTGETVPLGQDFVYTIREPLGLCVGIGAWNYPSQIACWKAAPALALGNAMVFKPSEVTPLGALKLAEILIEAGLPPGLFNVVQGRGAVGASLVTDSRVAKVSLTGSVPTGRRVYAAAAEGVRHVTMELGGKSPLIVFDDADLESAIGAAMLGNFYSAGQICSNGTRVFVQKGIKEAFLARLAERADAIRMGDPLDPEVQMGPLVSQAQLEKVLAYIEKARAEGGRLVCGGEASVSPGCYVQPTVFADVTDAMTLAREEVFGPVMAVLDFETEEEAIARANATDFGLAAGVFTADLTRAHRVVAQLQAGTCWINAYNLTPVEAPFGGVKLSGVGRENGRAAVQHYTQVKSVYVGMGPVDAPY.

Residues I27 and D93 each coordinate K(+). Residue 149 to 151 (GAW) participates in NAD(+) binding. K161 serves as the catalytic Charge relay system. Position 175-178 (175-178 (KPSE)) interacts with NAD(+). A K(+)-binding site is contributed by V179. An NAD(+)-binding site is contributed by 228-231 (SVPT). V243 serves as a coordination point for K(+). E249 (proton acceptor) is an active-site residue. NAD(+) contacts are provided by G251, C283, and E380. Catalysis depends on C283, which acts as the Nucleophile. A Cysteine sulfenic acid (-SOH) modification is found at C283. Positions 450 and 453 each coordinate K(+). E457 functions as the Charge relay system in the catalytic mechanism.

Belongs to the aldehyde dehydrogenase family. Dimer of dimers. K(+) is required as a cofactor.

It catalyses the reaction betaine aldehyde + NAD(+) + H2O = glycine betaine + NADH + 2 H(+). It functions in the pathway amine and polyamine biosynthesis; betaine biosynthesis via choline pathway; betaine from betaine aldehyde: step 1/1. Involved in the biosynthesis of the osmoprotectant glycine betaine. Catalyzes the irreversible oxidation of betaine aldehyde to the corresponding acid. The sequence is that of Betaine aldehyde dehydrogenase from Cereibacter sphaeroides (strain ATCC 17023 / DSM 158 / JCM 6121 / CCUG 31486 / LMG 2827 / NBRC 12203 / NCIMB 8253 / ATH 2.4.1.) (Rhodobacter sphaeroides).